A 394-amino-acid chain; its full sequence is Elongation factor Tu (394 aa).

In terms of domain architecture, tr-type G spans 10–204; the sequence is KPHINIGTIG…AVDDNIPTPE (195 aa). The segment at 19–26 is G1; that stretch reads GHVDHGKT. GTP is bound at residue 19–26; it reads GHVDHGKT. T26 is a Mg(2+) binding site. A G2 region spans residues 60–64; the sequence is GITIN. A G3 region spans residues 81–84; the sequence is DCPG. Residues 81-85 and 136-139 contribute to the GTP site; these read DCPGH and NKID. A G4 region spans residues 136-139; it reads NKID. The segment at 174–176 is G5; the sequence is SAL.

The protein belongs to the TRAFAC class translation factor GTPase superfamily. Classic translation factor GTPase family. EF-Tu/EF-1A subfamily. As to quaternary structure, monomer.

The protein localises to the cytoplasm. The catalysed reaction is GTP + H2O = GDP + phosphate + H(+). Functionally, GTP hydrolase that promotes the GTP-dependent binding of aminoacyl-tRNA to the A-site of ribosomes during protein biosynthesis. The sequence is that of Elongation factor Tu from Chlamydia caviae (strain ATCC VR-813 / DSM 19441 / 03DC25 / GPIC) (Chlamydophila caviae).